We begin with the raw amino-acid sequence, 326 residues long: 4-hydroxythreonine-4-phosphate dehydrogenase (326 aa).

T132 contributes to the substrate binding site. Positions 160, 205, and 260 each coordinate a divalent metal cation. The substrate site is built by K268, N277, and R286.

The protein belongs to the PdxA family. Homodimer. Zn(2+) serves as cofactor. Requires Mg(2+) as cofactor. Co(2+) is required as a cofactor.

Its subcellular location is the cytoplasm. It catalyses the reaction 4-(phosphooxy)-L-threonine + NAD(+) = 3-amino-2-oxopropyl phosphate + CO2 + NADH. It functions in the pathway cofactor biosynthesis; pyridoxine 5'-phosphate biosynthesis; pyridoxine 5'-phosphate from D-erythrose 4-phosphate: step 4/5. Catalyzes the NAD(P)-dependent oxidation of 4-(phosphooxy)-L-threonine (HTP) into 2-amino-3-oxo-4-(phosphooxy)butyric acid which spontaneously decarboxylates to form 3-amino-2-oxopropyl phosphate (AHAP). This chain is 4-hydroxythreonine-4-phosphate dehydrogenase, found in Stenotrophomonas maltophilia (strain R551-3).